A 163-amino-acid chain; its full sequence is Endoribonuclease YbeY (163 aa).

Zn(2+) contacts are provided by His-121, His-125, and His-131.

It belongs to the endoribonuclease YbeY family. Zn(2+) is required as a cofactor.

The protein localises to the cytoplasm. In terms of biological role, single strand-specific metallo-endoribonuclease involved in late-stage 70S ribosome quality control and in maturation of the 3' terminus of the 16S rRNA. The polypeptide is Endoribonuclease YbeY (Synechococcus sp. (strain JA-2-3B'a(2-13)) (Cyanobacteria bacterium Yellowstone B-Prime)).